A 310-amino-acid chain; its full sequence is Upstream stimulatory factor 1 (310 aa).

Over residues 1-17 the composition is skewed to polar residues; the sequence is MKGQQKTAETEEGTVQI. Disordered stretches follow at residues 1–26 and 171–209; these read MKGQ…ATGE and QGGS…EVER. Positions 190–209 are enriched in basic and acidic residues; sequence EAPRTTRDEKRRAQHNEVER. A bHLH domain is found at 199-254; sequence KRRAQHNEVERRRRDKINNWIVQLSKIIPDCSMESTKSGQSKGGILSKACDYIQEL. The leucine-zipper stretch occupies residues 271–292; it reads LQLDNDVLRQQVEDLKNKNLLL. A Glycyl lysine isopeptide (Lys-Gly) (interchain with G-Cter in SUMO2) cross-link involves residue K306.

In terms of assembly, efficient DNA binding requires dimerization with another bHLH protein. Binds DNA as a homodimer or a heterodimer (USF1/USF2). Interacts with varicella-zoster virus IE62 protein.

The protein localises to the nucleus. Its function is as follows. Transcription factor that binds to a symmetrical DNA sequence (E-boxes) (5'-CACGTG-3') that is found in a variety of viral and cellular promoters. This Homo sapiens (Human) protein is Upstream stimulatory factor 1 (USF1).